Consider the following 967-residue polypeptide: Isoleucine--tRNA ligase 2 (967 aa).

The 'HIGH' region signature appears at 58-68 (PYANGDIHIGH). A compositionally biased stretch (low complexity) spans 437–446 (AVTEEAGATG). Residues 437–466 (AVTEEAGATGEARKVGKAEEAEEAGPAKTL) form a disordered region. Glu598 serves as a coordination point for L-isoleucyl-5'-AMP. The 'KMSKS' region signature appears at 639 to 643 (KMSKS). Lys642 is a binding site for ATP. Zn(2+) contacts are provided by Cys922, Cys925, Cys942, and Cys945.

This sequence belongs to the class-I aminoacyl-tRNA synthetase family. IleS type 1 subfamily. In terms of assembly, monomer. Requires Zn(2+) as cofactor.

Its subcellular location is the cytoplasm. It catalyses the reaction tRNA(Ile) + L-isoleucine + ATP = L-isoleucyl-tRNA(Ile) + AMP + diphosphate. Functionally, catalyzes the attachment of isoleucine to tRNA(Ile). As IleRS can inadvertently accommodate and process structurally similar amino acids such as valine, to avoid such errors it has two additional distinct tRNA(Ile)-dependent editing activities. One activity is designated as 'pretransfer' editing and involves the hydrolysis of activated Val-AMP. The other activity is designated 'posttransfer' editing and involves deacylation of mischarged Val-tRNA(Ile). The protein is Isoleucine--tRNA ligase 2 of Burkholderia mallei (strain ATCC 23344).